The sequence spans 437 residues: Trigger factor (437 aa).

A PPIase FKBP-type domain is found at 163 to 248 (DDRVTVDFEG…VKKIEASHLP (86 aa)).

It belongs to the FKBP-type PPIase family. Tig subfamily.

It localises to the cytoplasm. The enzyme catalyses [protein]-peptidylproline (omega=180) = [protein]-peptidylproline (omega=0). In terms of biological role, involved in protein export. Acts as a chaperone by maintaining the newly synthesized protein in an open conformation. Functions as a peptidyl-prolyl cis-trans isomerase. The protein is Trigger factor of Variovorax paradoxus (strain S110).